Consider the following 386-residue polypeptide: Mannitol-1-phosphate 5-dehydrogenase (386 aa).

Residue 4–15 coordinates NAD(+); it reads ALHFGAGNIGRG.

This sequence belongs to the mannitol dehydrogenase family.

It catalyses the reaction D-mannitol 1-phosphate + NAD(+) = beta-D-fructose 6-phosphate + NADH + H(+). The polypeptide is Mannitol-1-phosphate 5-dehydrogenase (Caldanaerobacter subterraneus subsp. tengcongensis (strain DSM 15242 / JCM 11007 / NBRC 100824 / MB4) (Thermoanaerobacter tengcongensis)).